The following is a 71-amino-acid chain: Putative membrane protein insertion efficiency factor (71 aa).

It belongs to the UPF0161 family.

The protein localises to the cell membrane. Functionally, could be involved in insertion of integral membrane proteins into the membrane. The sequence is that of Putative membrane protein insertion efficiency factor from Clostridium acetobutylicum (strain ATCC 824 / DSM 792 / JCM 1419 / IAM 19013 / LMG 5710 / NBRC 13948 / NRRL B-527 / VKM B-1787 / 2291 / W).